Consider the following 636-residue polypeptide: MSLLHTFWRLPVAVFFEPHEENVLRCPERVLRRLLEDAAVAMRGGGWREDVLMDRVRKRYLRQELRDLGHRVQTYCEDLEGRVSEAEALLNQQCELDEGPSPRTLLQPPCRPRSSSPGTGVAGASAVPHGLYSRHDAITGPVAAPSDAVAASAAAGASSTWLAQCAEQPLPGNVPNYFGITQNDPFIRFHTDFRGEVVNTMFENASTWTFSFGIWYYRLKRGLYTQPRWKRVYHLAQMDNFSISQELLLGVVNALENVTVYPTYDCVLSDLEAAACLLVAYGHALWEGRDPPDSVTAVLSELPQLLPRLADDVSREIAAWEGPVAAGNNYYAYRDSPDLRYYMPLSGGRHYHPGTFDRHVLVRLFHKRGVLQHLPGYGTITEELVQERLSGQVRDDVLSLWSRRLLVGKLGRDVPVFVHEQQYLRSGLTCLAGLLLLWKVTNADSVFAPRTGKFTLADLLGSDAVAGGGLPGGRAGGEEKGYGGRHGRVRNFEFLVQYYIGPWYARDPAVTLSQLFPGLALLAVTESVRSGWDPSRREDSAGGGDGGGAVLMQLSKSNPVADYMFAQSSKQYGDLRRLEVHDALLFHYEHGLGRLLSVTLPRHRVSTLGSSLFNVNDIYELLYFLVLGFLPSVAVL.

The interval Met-1 to Arg-48 is interaction with major capsid protein/MCP. The interval Asp-97–Ser-125 is disordered.

This sequence belongs to the herpesviridae CVC2 protein family. In terms of assembly, heterodimerizes with CVC1. Interacts with major capsid protein/MCP and triplex capsid protein 1/TRX1 at the pentamer vertices. Interacts with the large tegument protein/LTP.

It localises to the virion. It is found in the host nucleus. Its function is as follows. Capsid vertex-specific component that plays a role during viral DNA encapsidation, assuring correct genome cleavage and presumably stabilizing capsids that contain full-length viral genomes. Participates in the interaction between the capsid and the tegument through interaction with the large tegument protein/LTP. The polypeptide is Capsid vertex component 2 (Homo sapiens (Human)).